A 137-amino-acid chain; its full sequence is uncharacterized protein (137 aa).

4 helical membrane passes run 14–34 (AVVV…GSIS), 48–68 (YHII…SLSI), 84–104 (FFTI…LGLT), and 109–129 (HIPS…LNLF).

It localises to the cell membrane. This is an uncharacterized protein from Methanocaldococcus jannaschii (strain ATCC 43067 / DSM 2661 / JAL-1 / JCM 10045 / NBRC 100440) (Methanococcus jannaschii).